The following is a 208-amino-acid chain: Pyridoxine/pyridoxamine 5'-phosphate oxidase (208 aa).

Residues 55-60, 70-71, K76, K77, and Q99 each bind FMN; these read RMVLLK and YT. K60 provides a ligand contact to substrate. Residues Y117, R121, and S125 each coordinate substrate. FMN is bound by residues 134–135 and W179; that span reads QS. 185 to 187 serves as a coordination point for substrate; that stretch reads RLH. R189 is a binding site for FMN.

The protein belongs to the pyridoxamine 5'-phosphate oxidase family. Homodimer. FMN is required as a cofactor.

It catalyses the reaction pyridoxamine 5'-phosphate + O2 + H2O = pyridoxal 5'-phosphate + H2O2 + NH4(+). The enzyme catalyses pyridoxine 5'-phosphate + O2 = pyridoxal 5'-phosphate + H2O2. It participates in cofactor metabolism; pyridoxal 5'-phosphate salvage; pyridoxal 5'-phosphate from pyridoxamine 5'-phosphate: step 1/1. Its pathway is cofactor metabolism; pyridoxal 5'-phosphate salvage; pyridoxal 5'-phosphate from pyridoxine 5'-phosphate: step 1/1. Catalyzes the oxidation of either pyridoxine 5'-phosphate (PNP) or pyridoxamine 5'-phosphate (PMP) into pyridoxal 5'-phosphate (PLP). The sequence is that of Pyridoxine/pyridoxamine 5'-phosphate oxidase from Brucella ovis (strain ATCC 25840 / 63/290 / NCTC 10512).